The primary structure comprises 389 residues: Succinyl-diaminopimelate desuccinylase (389 aa).

H75 contributes to the Zn(2+) binding site. Residue D77 is part of the active site. Residue D108 coordinates Zn(2+). The active-site Proton acceptor is the E142. Residues E143, E171, and H357 each coordinate Zn(2+).

It belongs to the peptidase M20A family. DapE subfamily. In terms of assembly, homodimer. Zn(2+) serves as cofactor. It depends on Co(2+) as a cofactor.

It carries out the reaction N-succinyl-(2S,6S)-2,6-diaminopimelate + H2O = (2S,6S)-2,6-diaminopimelate + succinate. It participates in amino-acid biosynthesis; L-lysine biosynthesis via DAP pathway; LL-2,6-diaminopimelate from (S)-tetrahydrodipicolinate (succinylase route): step 3/3. In terms of biological role, catalyzes the hydrolysis of N-succinyl-L,L-diaminopimelic acid (SDAP), forming succinate and LL-2,6-diaminopimelate (DAP), an intermediate involved in the bacterial biosynthesis of lysine and meso-diaminopimelic acid, an essential component of bacterial cell walls. The chain is Succinyl-diaminopimelate desuccinylase from Paracidovorax citrulli (strain AAC00-1) (Acidovorax citrulli).